The primary structure comprises 568 residues: Malate synthase, glyoxysomal (568 aa).

The disordered stretch occupies residues 1–20 (MGSLGMYSESGLTKKGSSRG). Catalysis depends on R183, which acts as the Proton acceptor. The active-site Proton donor is D469. Residues 566 to 568 (SKL) carry the Microbody targeting signal motif.

Belongs to the malate synthase family.

It is found in the glyoxysome. It catalyses the reaction glyoxylate + acetyl-CoA + H2O = (S)-malate + CoA + H(+). Its pathway is carbohydrate metabolism; glyoxylate cycle; (S)-malate from isocitrate: step 2/2. The polypeptide is Malate synthase, glyoxysomal (Cucumis sativus (Cucumber)).